The primary structure comprises 80 residues: UPF0346 protein LSEI_1394 (80 aa).

Belongs to the UPF0346 family.

This Lacticaseibacillus paracasei (strain ATCC 334 / BCRC 17002 / CCUG 31169 / CIP 107868 / KCTC 3260 / NRRL B-441) (Lactobacillus paracasei) protein is UPF0346 protein LSEI_1394.